A 384-amino-acid chain; its full sequence is D-galactosamine-6-phosphate deaminase AgaS (384 aa).

SIS domains lie at 45–197 (LEPL…SQTF) and 215–364 (SEGV…PDTP).

This sequence belongs to the SIS family. AgaS subfamily.

The catalysed reaction is D-galactosamine 6-phosphate + H2O = D-tagatopyranose 1-phosphate + NH4(+). In terms of biological role, catalyzes the isomerization-deamination of galactosamine 6-phosphate to form tagatofuranose 6-phosphate and ammonium ion. The chain is D-galactosamine-6-phosphate deaminase AgaS from Escherichia coli O157:H7.